The chain runs to 929 residues: LPS-assembly protein LptD (929 aa).

An N-terminal signal peptide occupies residues 1 to 24; sequence MKLRFIRSAGWLFLLFCLACNARA. Residues 26 to 208 are disordered; that stretch reads LPPLSSKPEQ…EAGDEKLRLA (183 aa). Residues 44–74 are compositionally biased toward basic and acidic residues; sequence GDDKPVVIDTERIRGHHEYESGTRSESELRS. Residues 154–164 are compositionally biased toward polar residues; sequence RTQSAPRTLSA. Basic and acidic residues predominate over residues 181 to 208; that stretch reads DQDRPGFAEGERIGGHREEAGDEKLRLA.

Belongs to the LptD family. In terms of assembly, component of the lipopolysaccharide transport and assembly complex. Interacts with LptE and LptA.

Its subcellular location is the cell outer membrane. Its function is as follows. Together with LptE, is involved in the assembly of lipopolysaccharide (LPS) at the surface of the outer membrane. The protein is LPS-assembly protein LptD of Nitrosospira multiformis (strain ATCC 25196 / NCIMB 11849 / C 71).